Consider the following 151-residue polypeptide: Deoxyuridine 5'-triphosphate nucleotidohydrolase (151 aa).

Substrate is bound by residues 70–72, N83, 87–89, and M97; these read RSG and LID.

The protein belongs to the dUTPase family. Requires Mg(2+) as cofactor.

It carries out the reaction dUTP + H2O = dUMP + diphosphate + H(+). Its pathway is pyrimidine metabolism; dUMP biosynthesis; dUMP from dCTP (dUTP route): step 2/2. In terms of biological role, this enzyme is involved in nucleotide metabolism: it produces dUMP, the immediate precursor of thymidine nucleotides and it decreases the intracellular concentration of dUTP so that uracil cannot be incorporated into DNA. The protein is Deoxyuridine 5'-triphosphate nucleotidohydrolase of Histophilus somni (strain 129Pt) (Haemophilus somnus).